An 89-amino-acid chain; its full sequence is Small ribosomal subunit protein bS20 (89 aa).

Over residues 1 to 11 (MANIKSQIKRN) the composition is skewed to polar residues. The tract at residues 1–22 (MANIKSQIKRNLTNEKRRLRNK) is disordered.

Belongs to the bacterial ribosomal protein bS20 family.

Binds directly to 16S ribosomal RNA. The chain is Small ribosomal subunit protein bS20 from Frankia casuarinae (strain DSM 45818 / CECT 9043 / HFP020203 / CcI3).